Consider the following 748-residue polypeptide: CCR4-NOT transcription complex subunit 10-B (748 aa).

Over residues M1–G16 the composition is skewed to basic and acidic residues. Disordered regions lie at residues M1–D25, K483–S524, and V605–P634. Composition is skewed to polar residues over residues G487–N509 and V605–E615.

It belongs to the CNOT10 family. As to quaternary structure, component of the CCR4-NOT complex. cnot10 and cnot11 form a subcomplex docked to the cnot1 scaffold.

The protein localises to the cytoplasm. Its subcellular location is the nucleus. Its function is as follows. Component of the CCR4-NOT complex which is one of the major cellular mRNA deadenylases and is linked to various cellular processes including bulk mRNA degradation, miRNA-mediated repression, translational repression during translational initiation and general transcription regulation. Additional complex functions may be a consequence of its influence on mRNA expression. Is not required for association of CNOT7 to the CCR4-NOT complex. This Xenopus laevis (African clawed frog) protein is CCR4-NOT transcription complex subunit 10-B (cnot10-b).